A 391-amino-acid chain; its full sequence is Na(+)/H(+) antiporter NhaA 1 (391 aa).

11 consecutive transmembrane segments (helical) span residues 25 to 45 (AGGI…NSPL), 56 to 76 (VWLG…IFFL), 98 to 118 (ALPG…YIAI), 128 to 148 (GWAI…SLLG), 157 to 177 (VFLA…IAFF), 180 to 200 (AGLN…LIVM), 208 to 228 (LLPY…SGVH), 264 to 284 (VAFA…LAGI), 297 to 317 (VALG…VLAI), 335 to 355 (GVAM…NLAF), and 364 to 384 (EVKV…IVLL).

It belongs to the NhaA Na(+)/H(+) (TC 2.A.33) antiporter family.

It is found in the cell inner membrane. The enzyme catalyses Na(+)(in) + 2 H(+)(out) = Na(+)(out) + 2 H(+)(in). Functionally, na(+)/H(+) antiporter that extrudes sodium in exchange for external protons. The sequence is that of Na(+)/H(+) antiporter NhaA 1 from Pseudomonas syringae pv. syringae (strain B728a).